Consider the following 185-residue polypeptide: Anaphase-promoting complex subunit 10 (185 aa).

Thr-2 carries the post-translational modification N-acetylthreonine. The region spanning 2–185 (TTPNKTPPGA…IDFMMYRSIR (184 aa)) is the DOC domain. Lys-169 is modified (N6-acetyllysine).

It belongs to the APC10 family. As to quaternary structure, the mammalian APC/C is composed at least of 14 distinct subunits ANAPC1, ANAPC2, CDC27/APC3, ANAPC4, ANAPC5, CDC16/APC6, ANAPC7, CDC23/APC8, ANAPC10, ANAPC11, CDC26/APC12, ANAPC13, ANAPC15 and ANAPC16 that assemble into a complex of at least 19 chains with a combined molecular mass of around 1.2 MDa; APC/C interacts with FZR1 and FBXO5. The C-terminus of APC10 binds to CDC27/APC3. Interacts with PIWIL1; interaction only takes place when PIWIL1 binds piRNA. Interacts with FBXO43; the interaction is direct.

It participates in protein modification; protein ubiquitination. In terms of biological role, component of the anaphase promoting complex/cyclosome (APC/C), a cell cycle-regulated E3 ubiquitin ligase that controls progression through mitosis and the G1 phase of the cell cycle. The APC/C complex acts by mediating ubiquitination and subsequent degradation of target proteins: it mainly mediates the formation of 'Lys-11'-linked polyubiquitin chains and, to a lower extent, the formation of 'Lys-48'- and 'Lys-63'-linked polyubiquitin chains. The APC/C complex catalyzes assembly of branched 'Lys-11'-/'Lys-48'-linked branched ubiquitin chains on target proteins. This chain is Anaphase-promoting complex subunit 10 (ANAPC10), found in Homo sapiens (Human).